The primary structure comprises 2049 residues: Non-reducing polyketide synthase hmp3 (2049 aa).

The tract at residues 9–246 is N-terminal acylcarrier protein transacylase (SAT) domain; the sequence is LYFGDQTDSW…NELSIHALQH (238 aa). One can recognise a Ketosynthase family 3 (KS3) domain in the interval 365–793; sequence PGRIAIVGMA…GGNASLILED (429 aa). Active-site for beta-ketoacyl synthase activity residues include Cys538, His673, and His712. A malonyl-CoA:ACP transacylase (MAT) domain region spans residues 887–1146; that stretch reads VFVFTGQGSH…VDFVGALGAL (260 aa). Ser978 functions as the For acyl/malonyl transferase activity in the catalytic mechanism. The segment at 1265–1404 is N-terminal hotdog fold; the sequence is QQIVEESSSP…AQTLQTSWNR (140 aa). Residues 1265–1573 form the PKS/mFAS DH domain; the sequence is QQIVEESSSP…FHEVSNNVLD (309 aa). Residues 1269–1572 form a product template (PT) domain region; that stretch reads EESSSPSLHV…SFHEVSNNVL (304 aa). Residues 1425–1573 form a C-terminal hotdog fold region; that stretch reads GHRMLPSILY…FHEVSNNVLD (149 aa). In terms of domain architecture, Carrier spans 1626–1704; the sequence is SSESELFHTI…DLRNEFARSS (79 aa). Ser1663 is modified (O-(pantetheine 4'-phosphoryl)serine). A disordered region spans residues 1700-1747; the sequence is FARSSTSTPPSKTFSEFSIVDATPESTRSSSRAPSEKKEPAPASEKSE. Over residues 1703 to 1717 the composition is skewed to low complexity; that stretch reads SSTSTPPSKTFSEFS. Polar residues predominate over residues 1723–1732; the sequence is PESTRSSSRA. Residues 1733-1747 are compositionally biased toward basic and acidic residues; the sequence is PSEKKEPAPASEKSE. The thioesterase (TE) domain stretch occupies residues 1761–1951; the sequence is SPLPSARITL…KRTAIIWAKK (191 aa).

It functions in the pathway secondary metabolite biosynthesis. Functionally, non-reducing polyketide synthase; part of the gene cluster that mediates the biosynthesis of hypothemycin, a resorcylic acid lactone (RAL) that irreversibly inhibits a subset of protein kinases with a conserved cysteine in the ATP binding site such as human ERK2. The first step is performed by both PKSs hmp3 and hmp8 and leads to the production of 7',8'-dehydrozearalenol (DHZ). The highly reducing PKS hpm8 synthesizes the reduced hexaketide (7S,11S,2E,8E)-7,11-dihydroxy-dodeca-2,8-dienoate, which is transferred downstream to the non-reducing PKS hpm3. Hpm3 then extends the reduced hexaketide to a nonaketide, after which regioselective cyclization and macrolactonization affords DHZ. The next step is the conversion of DHZ into aigialomycin C and is performed by the O-methyltransferase hmp5, the FAD-binding monooxygenase hmp7, and the cytochrome P450 monooxygenase hmp1. The wide substrate tolerance of the hmp5 and hmp7 implies that the reactions from DHZ to aigialomycin C can occur in any order. The steps from aigialomycin C to hypothemycin are less well established. The FAD-linked oxidoreductase hmp9 presumably catalyzes oxidation of the C-6' hydroxyl to a ketone. The timing of this oxidation is important, since the resulting enone functional group is a Michael acceptor that can react spontaneously with glutathione, an abundant metabolite in fungal cells. The glutathione S-transferase hmp2 catalyzes cis-trans isomerization of the 7',8' double bond with equilibrium favoring the trans isomer. The hpm6-encoded transporter might preferentially pump hypothemycin out of the cell relative to the trans isomer aigialomycin A. The cis-to-trans isomerization may be coupled with C-4' hydroxylation, since all known hypothemycin analogs containing the enone functional group also have hydroxyl groups at both C-4' and C-5'. The protein is Non-reducing polyketide synthase hmp3 of Hypomyces subiculosus (Nectria subiculosa).